A 240-amino-acid chain; its full sequence is UDP-2,3-diacylglucosamine hydrolase (240 aa).

Residues D8, H10, D41, N78, and H113 each coordinate Mn(2+). A substrate-binding site is contributed by 78–79; sequence NR. Residues D121, S159, N163, K166, and H194 each coordinate substrate. Mn(2+)-binding residues include H194 and H196.

It belongs to the LpxH family. It depends on Mn(2+) as a cofactor.

Its subcellular location is the cell inner membrane. It carries out the reaction UDP-2-N,3-O-bis[(3R)-3-hydroxytetradecanoyl]-alpha-D-glucosamine + H2O = 2-N,3-O-bis[(3R)-3-hydroxytetradecanoyl]-alpha-D-glucosaminyl 1-phosphate + UMP + 2 H(+). It participates in glycolipid biosynthesis; lipid IV(A) biosynthesis; lipid IV(A) from (3R)-3-hydroxytetradecanoyl-[acyl-carrier-protein] and UDP-N-acetyl-alpha-D-glucosamine: step 4/6. Functionally, hydrolyzes the pyrophosphate bond of UDP-2,3-diacylglucosamine to yield 2,3-diacylglucosamine 1-phosphate (lipid X) and UMP by catalyzing the attack of water at the alpha-P atom. Involved in the biosynthesis of lipid A, a phosphorylated glycolipid that anchors the lipopolysaccharide to the outer membrane of the cell. The protein is UDP-2,3-diacylglucosamine hydrolase of Shewanella baltica (strain OS223).